The sequence spans 434 residues: Double-stranded RNA-binding protein 2 (434 aa).

DRBM domains follow at residues 1–70 (MYKN…ALSN) and 87–155 (VYKN…SLKQ). The interval 402 to 434 (EKTASKETERAEFKDSSKGEPETARERLENLKI) is disordered.

As to quaternary structure, heterodimer with DRB1 or DRB5. Interacts with DCL1 and DCL5.

It localises to the cytoplasm. Binds double-stranded RNA. May be involved in RNA-mediated silencing. The protein is Double-stranded RNA-binding protein 2 (DRB2) of Arabidopsis thaliana (Mouse-ear cress).